Reading from the N-terminus, the 585-residue chain is MNIFADFDTRIKNALETLDLVKENREKVDFSRITVESPRDLSHGDVATNAAMVLAKPLGTNPRALAELLVPALQADGDVDGVNVAGPGFINLKVSVGYWQRLLADMIGQGVDFGRSTVGAGQKINVEYVSANPTGPMHVGHCRGAVVGDTLANLLAFAGYGVTKEYYINDAGSQIDVLARSVFLRYREALGEDIGSIPSGLYPGDYLVPVGQALADEYGIKLRAMPEEKWLPIVKDKAIDAMMVMIREDLALLNVRHDVFFSERTLHEGNGGPILSAINDLTFKGHVYKGTLPPPKGELPDDWEDREQTLFRSTEVGDDMDRALMKSDGSYTYFAADVAYFKNKFDRGFSEMIYVLGADHGGYVKRLEAVARAVSEGKSKLTVLLCQLVKLFRDGEPVKMSKRSGDFVTLRDVVDEVGRDPVRFMMLYRKNSEPLDFDFAKVTEQSKDNPVFYVQYAHARCKSIFRQAQEAFPGLAPSAEDMAASVALISDINELQLVAKLAEYPRLIESAALSHEPHRLAFYLYDLAGSFHGHWNKGKDHQELRFINDKNRELSIARLGLVNAVANVLKSGLTLLGADAPDEMR.

The short motif at 131-141 is the 'HIGH' region element; sequence ANPTGPMHVGH.

The protein belongs to the class-I aminoacyl-tRNA synthetase family. Monomer.

Its subcellular location is the cytoplasm. It catalyses the reaction tRNA(Arg) + L-arginine + ATP = L-arginyl-tRNA(Arg) + AMP + diphosphate. This chain is Arginine--tRNA ligase, found in Agrobacterium fabrum (strain C58 / ATCC 33970) (Agrobacterium tumefaciens (strain C58)).